Reading from the N-terminus, the 137-residue chain is Large ribosomal subunit protein uL16 (137 aa).

Belongs to the universal ribosomal protein uL16 family. As to quaternary structure, part of the 50S ribosomal subunit.

Functionally, binds 23S rRNA and is also seen to make contacts with the A and possibly P site tRNAs. This chain is Large ribosomal subunit protein uL16, found in Xanthomonas axonopodis pv. citri (strain 306).